The following is a 564-amino-acid chain: Adenine deaminase (564 aa).

This sequence belongs to the metallo-dependent hydrolases superfamily. Adenine deaminase family. Requires Mn(2+) as cofactor.

It catalyses the reaction adenine + H2O + H(+) = hypoxanthine + NH4(+). The polypeptide is Adenine deaminase (Methylobacterium sp. (strain 4-46)).